The chain runs to 119 residues: Protein FATTY ACID EXPORT 5 (119 aa).

3 helical membrane passes run 27-47, 57-77, and 85-105; these read SIASLAGGAGTGLLVVLAGFI, TSLLATLLETVIAAALTFVMG, and KIMPAALVAGISALMTCFYVY.

Belongs to the TMEM14 family.

The protein localises to the membrane. May be involved in free fatty acids export. In Arabidopsis thaliana (Mouse-ear cress), this protein is Protein FATTY ACID EXPORT 5.